The primary structure comprises 332 residues: Ribose-phosphate pyrophosphokinase (332 aa).

57-59 (DGE) lines the ATP pocket. 2 residues coordinate Mg(2+): histidine 150 and aspartate 189. Residue lysine 213 is part of the active site. D-ribose 5-phosphate-binding positions include arginine 215, aspartate 239, and 243-247 (DTAGT).

The protein belongs to the ribose-phosphate pyrophosphokinase family. Class I subfamily. In terms of assembly, homohexamer. Mg(2+) serves as cofactor.

Its subcellular location is the cytoplasm. The enzyme catalyses D-ribose 5-phosphate + ATP = 5-phospho-alpha-D-ribose 1-diphosphate + AMP + H(+). The protein operates within metabolic intermediate biosynthesis; 5-phospho-alpha-D-ribose 1-diphosphate biosynthesis; 5-phospho-alpha-D-ribose 1-diphosphate from D-ribose 5-phosphate (route I): step 1/1. Involved in the biosynthesis of the central metabolite phospho-alpha-D-ribosyl-1-pyrophosphate (PRPP) via the transfer of pyrophosphoryl group from ATP to 1-hydroxyl of ribose-5-phosphate (Rib-5-P). This Gloeobacter violaceus (strain ATCC 29082 / PCC 7421) protein is Ribose-phosphate pyrophosphokinase.